The chain runs to 236 residues: Purine nucleoside phosphorylase DeoD-type 1 (236 aa).

An a purine D-ribonucleoside-binding site is contributed by histidine 5. Phosphate-binding positions include glycine 21, arginine 25, arginine 44, and arginine 88 to serine 91. Residues glutamate 180–glutamate 182 and threonine 204–aspartate 205 each bind a purine D-ribonucleoside. Catalysis depends on aspartate 205, which acts as the Proton donor.

This sequence belongs to the PNP/UDP phosphorylase family. As to quaternary structure, homohexamer; trimer of homodimers.

The catalysed reaction is a purine D-ribonucleoside + phosphate = a purine nucleobase + alpha-D-ribose 1-phosphate. The enzyme catalyses a purine 2'-deoxy-D-ribonucleoside + phosphate = a purine nucleobase + 2-deoxy-alpha-D-ribose 1-phosphate. Functionally, catalyzes the reversible phosphorolytic breakdown of the N-glycosidic bond in the beta-(deoxy)ribonucleoside molecules, with the formation of the corresponding free purine bases and pentose-1-phosphate. The sequence is that of Purine nucleoside phosphorylase DeoD-type 1 from Shewanella oneidensis (strain ATCC 700550 / JCM 31522 / CIP 106686 / LMG 19005 / NCIMB 14063 / MR-1).